The chain runs to 343 residues: Anthranilate phosphoribosyltransferase (343 aa).

Residues glycine 84, 87-88, threonine 92, 94-97, 112-120, and serine 124 contribute to the 5-phospho-alpha-D-ribose 1-diphosphate site; these read GD, NIST, and KHGNRGVSS. Residue glycine 84 participates in anthranilate binding. Residue serine 96 participates in Mg(2+) binding. Asparagine 115 is an anthranilate binding site. Arginine 170 lines the anthranilate pocket. Aspartate 229 and glutamate 230 together coordinate Mg(2+).

The protein belongs to the anthranilate phosphoribosyltransferase family. As to quaternary structure, homodimer. Requires Mg(2+) as cofactor.

The catalysed reaction is N-(5-phospho-beta-D-ribosyl)anthranilate + diphosphate = 5-phospho-alpha-D-ribose 1-diphosphate + anthranilate. Its pathway is amino-acid biosynthesis; L-tryptophan biosynthesis; L-tryptophan from chorismate: step 2/5. In terms of biological role, catalyzes the transfer of the phosphoribosyl group of 5-phosphorylribose-1-pyrophosphate (PRPP) to anthranilate to yield N-(5'-phosphoribosyl)-anthranilate (PRA). This is Anthranilate phosphoribosyltransferase from Burkholderia orbicola (strain MC0-3).